The sequence spans 1488 residues: Chromosome partition protein MukB (1488 aa).

34–41 is an ATP binding site; the sequence is GGNGAGKS. 3 coiled-coil regions span residues 326-418, 444-472, and 509-602; these read LEAD…QYNQ, LDTF…QTAH, and RHLA…QRAP. The tract at residues 666–783 is flexible hinge; it reads PGGAEDQRLN…SLPIFGRAAR (118 aa). Coiled coils occupy residues 835-923, 977-1116, and 1209-1265; these read EAEI…AKLE, EMLS…AKAG, and VEAI…LQSV. A disordered region spans residues 1049-1074; that stretch reads ADSGAEERARQRRDELHAQLSNNRSR. Residues 1051–1065 are compositionally biased toward basic and acidic residues; the sequence is SGAEERARQRRDELH.

It belongs to the SMC family. MukB subfamily. In terms of assembly, homodimerization via its hinge domain. Binds to DNA via its C-terminal region. Interacts, and probably forms a ternary complex, with MukE and MukF via its C-terminal region. The complex formation is stimulated by calcium or magnesium. Interacts with tubulin-related protein FtsZ.

The protein localises to the cytoplasm. Its subcellular location is the nucleoid. Plays a central role in chromosome condensation, segregation and cell cycle progression. Functions as a homodimer, which is essential for chromosome partition. Involved in negative DNA supercoiling in vivo, and by this means organize and compact chromosomes. May achieve or facilitate chromosome segregation by condensation DNA from both sides of a centrally located replisome during cell division. This is Chromosome partition protein MukB from Salmonella typhi.